The sequence spans 386 residues: DNase toxin Tse7 (386 aa).

Interacts with Tsi7.

The catalysed reaction is Endonucleolytic cleavage to 5'-phosphodinucleotide and 5'-phosphooligonucleotide end-products.. In terms of biological role, type VI secretion exported toxin that via to its DNase activity induces growth arrest and ultimately DNA degradation within target cell. The activity is initially neutralized by a cognate immunity protein Tsi7. In Pseudomonas aeruginosa (strain ATCC 15692 / DSM 22644 / CIP 104116 / JCM 14847 / LMG 12228 / 1C / PRS 101 / PAO1), this protein is DNase toxin Tse7.